The primary structure comprises 535 residues: Lecithin-cholesterol acyltransferase-like 4 (535 aa).

S2 is subject to N-acetylserine. The Acyl-ester intermediate role is filled by S182. Active-site charge relay system residues include D391 and H416. Polar residues predominate over residues 488–505 (STVNSISVSQPGDDQNPQ). The disordered stretch occupies residues 488–507 (STVNSISVSQPGDDQNPQAE).

This sequence belongs to the AB hydrolase superfamily. Lipase family.

The polypeptide is Lecithin-cholesterol acyltransferase-like 4 (LCAT4) (Arabidopsis thaliana (Mouse-ear cress)).